We begin with the raw amino-acid sequence, 212 residues long: Peptide methionine sulfoxide reductase MsrA (212 aa).

The active site involves Cys-52.

The protein belongs to the MsrA Met sulfoxide reductase family.

The enzyme catalyses L-methionyl-[protein] + [thioredoxin]-disulfide + H2O = L-methionyl-(S)-S-oxide-[protein] + [thioredoxin]-dithiol. It catalyses the reaction [thioredoxin]-disulfide + L-methionine + H2O = L-methionine (S)-S-oxide + [thioredoxin]-dithiol. Its function is as follows. Has an important function as a repair enzyme for proteins that have been inactivated by oxidation. Catalyzes the reversible oxidation-reduction of methionine sulfoxide in proteins to methionine. The sequence is that of Peptide methionine sulfoxide reductase MsrA from Salmonella paratyphi B (strain ATCC BAA-1250 / SPB7).